The following is an 88-amino-acid chain: Small ribosomal subunit protein uS15 (88 aa).

It belongs to the universal ribosomal protein uS15 family. In terms of assembly, part of the 30S ribosomal subunit. Forms a bridge to the 50S subunit in the 70S ribosome, contacting the 23S rRNA.

Its function is as follows. One of the primary rRNA binding proteins, it binds directly to 16S rRNA where it helps nucleate assembly of the platform of the 30S subunit by binding and bridging several RNA helices of the 16S rRNA. Functionally, forms an intersubunit bridge (bridge B4) with the 23S rRNA of the 50S subunit in the ribosome. This is Small ribosomal subunit protein uS15 from Borrelia turicatae (strain 91E135).